The following is a 122-amino-acid chain: MIQTETRLKVADNSGAREILTIKVLGGSGRKFANIGDVIVASVKQATPGGAVKKGDVVKAVIVRTKSGARRADGSYIKFDENAAVIIREDKTPRGTRIFGPVARELREGGFMKIVSLAPEVL.

This sequence belongs to the universal ribosomal protein uL14 family. Part of the 50S ribosomal subunit. Forms a cluster with proteins L3 and L19. In the 70S ribosome, L14 and L19 interact and together make contacts with the 16S rRNA in bridges B5 and B8.

In terms of biological role, binds to 23S rRNA. Forms part of two intersubunit bridges in the 70S ribosome. The sequence is that of Large ribosomal subunit protein uL14 from Streptococcus pneumoniae (strain JJA).